The sequence spans 270 residues: B3 domain-containing protein Os03g0212300 (270 aa).

DNA-binding regions (TF-B3) lie at residues F13–T110 and V158–D265.

Its subcellular location is the nucleus. The protein is B3 domain-containing protein Os03g0212300 of Oryza sativa subsp. japonica (Rice).